A 902-amino-acid chain; its full sequence is Tiger protein B1 (902 aa).

An N-terminal signal peptide occupies residues 1-24 (MKVIYIYLLLLLVCKFLFVKSSCS). At 25 to 803 (LKVGKIECTK…IIYSENKSTG (779 aa)) the chain is on the extracellular side. N43, N144, N184, N223, N272, N279, N288, N358, N389, N398, N437, N559, N628, N644, N706, N753, N764, N771, and N799 each carry an N-linked (GlcNAc...) asparagine glycan. The IPT/TIG 1 domain maps to 249–323 (MEGVLNDNGG…ITIDGEYKSN (75 aa)). 2 IPT/TIG domains span residues 603 to 680 (PIIE…ISSS) and 704 to 788 (ITNT…IFQF). A helical membrane pass occupies residues 804 to 824 (FPNEMYLGFVVFVIFIALISF). The Cytoplasmic segment spans residues 825-902 (AAKNQIEKYF…IRRCFKEHTD (78 aa)).

The protein resides in the cell membrane. Its function is as follows. tgrB1 and tgrC1 are involved in kin discrimination. They play an essential role in aggregation and subsequent development. The polypeptide is Tiger protein B1 (tgrB1) (Dictyostelium discoideum (Social amoeba)).